A 1305-amino-acid polypeptide reads, in one-letter code: DNA-directed DNA polymerase (1305 aa).

This sequence belongs to the DNA polymerase type-C family.

The enzyme catalyses DNA(n) + a 2'-deoxyribonucleoside 5'-triphosphate = DNA(n+1) + diphosphate. In terms of biological role, replicates viral genomic DNA. In Bacillus pumilus (Bacillus mesentericus), this protein is DNA-directed DNA polymerase.